The sequence spans 336 residues: Acetaldehyde dehydrogenase 1 (336 aa).

32-35 (SGVV) provides a ligand contact to NAD(+). The Acyl-thioester intermediate role is filled by Cys-150. Asn-309 contacts NAD(+).

The protein belongs to the acetaldehyde dehydrogenase family.

It catalyses the reaction acetaldehyde + NAD(+) + CoA = acetyl-CoA + NADH + H(+). This is Acetaldehyde dehydrogenase 1 (mhpF) from Mycobacterium ulcerans (strain Agy99).